The sequence spans 268 residues: Tryptophan synthase alpha chain (268 aa).

Residues Glu49 and Asp60 each act as proton acceptor in the active site.

This sequence belongs to the TrpA family. In terms of assembly, tetramer of two alpha and two beta chains.

The enzyme catalyses (1S,2R)-1-C-(indol-3-yl)glycerol 3-phosphate + L-serine = D-glyceraldehyde 3-phosphate + L-tryptophan + H2O. It functions in the pathway amino-acid biosynthesis; L-tryptophan biosynthesis; L-tryptophan from chorismate: step 5/5. Functionally, the alpha subunit is responsible for the aldol cleavage of indoleglycerol phosphate to indole and glyceraldehyde 3-phosphate. This chain is Tryptophan synthase alpha chain, found in Escherichia coli O157:H7.